We begin with the raw amino-acid sequence, 65 residues long: Toxin Cbo5 (65 aa).

The LCN-type CS-alpha/beta domain maps to 2–65 (KDGYLVDKTG…QTWPLPNKSC (64 aa)). Cystine bridges form between Cys-12/Cys-65, Cys-16/Cys-41, Cys-25/Cys-46, and Cys-29/Cys-48.

The protein belongs to the long (4 C-C) scorpion toxin superfamily. Sodium channel inhibitor family. Beta subfamily. As to expression, expressed by the venom gland.

The protein localises to the secreted. A probable toxin that has no activity on the tested sodium channels (when tested at 200 nM) and is not toxic to mice, crickets or sweet water shrimps. It resembles Beta toxins that bind voltage-independently at site-4 of sodium channels and shift the voltage of activation toward more negative potentials, thereby affecting sodium channel activation and promoting spontaneous and repetitive firing. In Centruroides bonito (Scorpion), this protein is Toxin Cbo5.